The sequence spans 633 residues: Probable potassium transport system protein Kup 2 (633 aa).

Transmembrane regions (helical) follow at residues 18 to 38, 61 to 81, 109 to 129, 145 to 165, 173 to 193, 211 to 231, 255 to 275, 287 to 307, 345 to 365, 371 to 391, 405 to 425, and 427 to 447; these read FLAMTIGAIGVVYGDIGTSPL, LISLMLWTLTIIVTFKYVLFL, LMFMAGILGAALFIGDAMITP, PAFHDYVLPISVGIMVLLFAV, VSIFFGPITLIWFLVLGAAGV, AVTFLWNAGFVGFIVLGAVFL, WFAVVFPALTLNYLGQGALVL, LMFPNWALLPVVLLATAATII, IYLPFVNNALLAGVIVLMFMF, LATAYGISVTGAMVVTTVLAF, ATAVLLPLLVLELFFLGANLF, and IHDGGYVPILIAGTLMTTMWT.

This sequence belongs to the HAK/KUP transporter (TC 2.A.72) family.

The protein resides in the cell inner membrane. It carries out the reaction K(+)(in) + H(+)(in) = K(+)(out) + H(+)(out). In terms of biological role, transport of potassium into the cell. Likely operates as a K(+):H(+) symporter. The polypeptide is Probable potassium transport system protein Kup 2 (Sinorhizobium medicae (strain WSM419) (Ensifer medicae)).